The primary structure comprises 102 residues: Small ribosomal subunit protein uS10 (102 aa).

Belongs to the universal ribosomal protein uS10 family. Part of the 30S ribosomal subunit.

In terms of biological role, involved in the binding of tRNA to the ribosomes. In Listeria innocua serovar 6a (strain ATCC BAA-680 / CLIP 11262), this protein is Small ribosomal subunit protein uS10.